Here is a 238-residue protein sequence, read N- to C-terminus: MRPHHRLPDQMRELHIERAVNCHAEGSALITLGRTQVLCTASIEERVPPFLRGQNQGWVTAEYGMLPRATHERSTREAARGKQQGRTQEIQRLIGRSLRAVVDLSALGERSITLDCDVLQADGGTRTAAISGGFIALADAIRVLMQQGRLKANPLRGQLAAVSVGFYQGEALLDLEYCEDSAAETDMNIVMNDAGALIEIQGTAEGRAFSRQEMNALLDLAEKGISEIMAEQRRVLGL.

Residues Arg-86 and 124 to 126 (GTR) contribute to the phosphate site.

The protein belongs to the RNase PH family. As to quaternary structure, homohexameric ring arranged as a trimer of dimers.

The catalysed reaction is tRNA(n+1) + phosphate = tRNA(n) + a ribonucleoside 5'-diphosphate. In terms of biological role, phosphorolytic 3'-5' exoribonuclease that plays an important role in tRNA 3'-end maturation. Removes nucleotide residues following the 3'-CCA terminus of tRNAs; can also add nucleotides to the ends of RNA molecules by using nucleoside diphosphates as substrates, but this may not be physiologically important. Probably plays a role in initiation of 16S rRNA degradation (leading to ribosome degradation) during starvation. The protein is Ribonuclease PH of Dichelobacter nodosus (strain VCS1703A).